Consider the following 159-residue polypeptide: 2-C-methyl-D-erythritol 2,4-cyclodiphosphate synthase (159 aa).

Asp8 and His10 together coordinate a divalent metal cation. 4-CDP-2-C-methyl-D-erythritol 2-phosphate is bound by residues 8-10 (DVH) and 34-35 (HS). His42 provides a ligand contact to a divalent metal cation. 4-CDP-2-C-methyl-D-erythritol 2-phosphate is bound by residues 56–58 (DIG), 61–65 (FPDTD), 100–106 (AQAPKML), 132–135 (TTTE), Phe139, and Arg142.

Belongs to the IspF family. In terms of assembly, homotrimer. It depends on a divalent metal cation as a cofactor.

The catalysed reaction is 4-CDP-2-C-methyl-D-erythritol 2-phosphate = 2-C-methyl-D-erythritol 2,4-cyclic diphosphate + CMP. It functions in the pathway isoprenoid biosynthesis; isopentenyl diphosphate biosynthesis via DXP pathway; isopentenyl diphosphate from 1-deoxy-D-xylulose 5-phosphate: step 4/6. In terms of biological role, involved in the biosynthesis of isopentenyl diphosphate (IPP) and dimethylallyl diphosphate (DMAPP), two major building blocks of isoprenoid compounds. Catalyzes the conversion of 4-diphosphocytidyl-2-C-methyl-D-erythritol 2-phosphate (CDP-ME2P) to 2-C-methyl-D-erythritol 2,4-cyclodiphosphate (ME-CPP) with a corresponding release of cytidine 5-monophosphate (CMP). This chain is 2-C-methyl-D-erythritol 2,4-cyclodiphosphate synthase, found in Escherichia coli O139:H28 (strain E24377A / ETEC).